The sequence spans 134 residues: Psoriasis susceptibility 1 candidate gene 2 protein homolog (134 aa).

The N-terminal stretch at 1 to 21 is a signal peptide; it reads MLTWKLLGLLVLCLCAGGISG. Residues 18–134 are disordered; the sequence is GISGNGDPSP…DLDPPQEEYR (117 aa). 2 stretches are compositionally biased toward pro residues: residues 39–67 and 81–98; these read PPLPLGPPIPGDPWPGAPPLFDEPPPPGS and PPKPPSTDPPKPPLPDDP. The span at 122–134 shows a compositional bias: acidic residues; the sequence is EEPDLDPPQEEYR.

It localises to the secreted. This is Psoriasis susceptibility 1 candidate gene 2 protein homolog (Psors1c2) from Mus musculus (Mouse).